The sequence spans 285 residues: ATP synthase gamma chain (285 aa).

Belongs to the ATPase gamma chain family. F-type ATPases have 2 components, CF(1) - the catalytic core - and CF(0) - the membrane proton channel. CF(1) has five subunits: alpha(3), beta(3), gamma(1), delta(1), epsilon(1). CF(0) has three main subunits: a, b and c.

Its subcellular location is the cell membrane. Its function is as follows. Produces ATP from ADP in the presence of a proton gradient across the membrane. The gamma chain is believed to be important in regulating ATPase activity and the flow of protons through the CF(0) complex. This is ATP synthase gamma chain from Geobacillus kaustophilus (strain HTA426).